We begin with the raw amino-acid sequence, 311 residues long: HPr kinase/phosphorylase (311 aa).

Active-site residues include H138 and K159. 153–160 lines the ATP pocket; it reads GDSGIGKS. Mg(2+) is bound at residue S160. Residue D177 is the Proton acceptor; for phosphorylation activity. Proton donor; for dephosphorylation activity of the active site. The interval 201 to 210 is important for the catalytic mechanism of both phosphorylation and dephosphorylation; that stretch reads LEIRGVGIID. E202 is a binding site for Mg(2+). The active site involves R243. An important for the catalytic mechanism of dephosphorylation region spans residues 264-269; that stretch reads PVKTGR.

The protein belongs to the HPrK/P family. As to quaternary structure, homohexamer. Mg(2+) is required as a cofactor.

The enzyme catalyses [HPr protein]-L-serine + ATP = [HPr protein]-O-phospho-L-serine + ADP + H(+). It catalyses the reaction [HPr protein]-O-phospho-L-serine + phosphate + H(+) = [HPr protein]-L-serine + diphosphate. Its function is as follows. Catalyzes the ATP- as well as the pyrophosphate-dependent phosphorylation of a specific serine residue in HPr, a phosphocarrier protein of the phosphoenolpyruvate-dependent sugar phosphotransferase system (PTS). HprK/P also catalyzes the pyrophosphate-producing, inorganic phosphate-dependent dephosphorylation (phosphorolysis) of seryl-phosphorylated HPr (P-Ser-HPr). The two antagonistic activities of HprK/P are regulated by several intracellular metabolites, which change their concentration in response to the absence or presence of rapidly metabolisable carbon sources (glucose, fructose, etc.) in the growth medium. Therefore, by controlling the phosphorylation state of HPr, HPrK/P is a sensor enzyme that plays a major role in the regulation of carbon metabolism and sugar transport: it mediates carbon catabolite repression (CCR), and regulates PTS-catalyzed carbohydrate uptake and inducer exclusion. This is HPr kinase/phosphorylase from Streptococcus agalactiae serotype Ia (strain ATCC 27591 / A909 / CDC SS700).